A 176-amino-acid chain; its full sequence is Large ribosomal subunit protein eL6A (176 aa).

N-acetylserine is present on serine 2. Phosphoserine is present on serine 12. Lysine 128 participates in a covalent cross-link: Glycyl lysine isopeptide (Lys-Gly) (interchain with G-Cter in ubiquitin).

The protein belongs to the eukaryotic ribosomal protein eL6 family. As to quaternary structure, component of the large ribosomal subunit (LSU). Mature yeast ribosomes consist of a small (40S) and a large (60S) subunit. The 40S small subunit contains 1 molecule of ribosomal RNA (18S rRNA) and 33 different proteins (encoded by 57 genes). The large 60S subunit contains 3 rRNA molecules (25S, 5.8S and 5S rRNA) and 46 different proteins (encoded by 81 genes). N-terminally acetylated by acetyltransferase NatA.

The protein localises to the cytoplasm. Component of the ribosome, a large ribonucleoprotein complex responsible for the synthesis of proteins in the cell. The small ribosomal subunit (SSU) binds messenger RNAs (mRNAs) and translates the encoded message by selecting cognate aminoacyl-transfer RNA (tRNA) molecules. The large subunit (LSU) contains the ribosomal catalytic site termed the peptidyl transferase center (PTC), which catalyzes the formation of peptide bonds, thereby polymerizing the amino acids delivered by tRNAs into a polypeptide chain. The nascent polypeptides leave the ribosome through a tunnel in the LSU and interact with protein factors that function in enzymatic processing, targeting, and the membrane insertion of nascent chains at the exit of the ribosomal tunnel. This is Large ribosomal subunit protein eL6A from Saccharomyces cerevisiae (strain ATCC 204508 / S288c) (Baker's yeast).